Here is a 96-residue protein sequence, read N- to C-terminus: NADH-ubiquinone oxidoreductase chain 4L (96 aa).

The next 3 helical transmembrane spans lie at 1–21, 27–47, and 57–77; these read MPTT…SLQR, LLLT…LWAL, and APLI…SLMI.

The protein belongs to the complex I subunit 4L family.

It localises to the mitochondrion membrane. It catalyses the reaction a ubiquinone + NADH + 5 H(+)(in) = a ubiquinol + NAD(+) + 4 H(+)(out). Its function is as follows. Core subunit of the mitochondrial membrane respiratory chain NADH dehydrogenase (Complex I) which catalyzes electron transfer from NADH through the respiratory chain, using ubiquinone as an electron acceptor. Part of the enzyme membrane arm which is embedded in the lipid bilayer and involved in proton translocation. The chain is NADH-ubiquinone oxidoreductase chain 4L (MT-ND4L) from Petromyzon marinus (Sea lamprey).